Reading from the N-terminus, the 347-residue chain is GMP reductase (347 aa).

108–131 provides a ligand contact to NADP(+); that stretch reads ADFEKTKQILDLNPALNFVCIDVA. Residues Gly-181 and Gly-183 each coordinate K(+). Catalysis depends on Cys-186, which acts as the Thioimidate intermediate. Residue 216 to 239 participates in NADP(+) binding; it reads IVSDGGCTTPGDVAKAFGGGADFV.

The protein belongs to the IMPDH/GMPR family. GuaC type 1 subfamily. As to quaternary structure, homotetramer.

The catalysed reaction is IMP + NH4(+) + NADP(+) = GMP + NADPH + 2 H(+). In terms of biological role, catalyzes the irreversible NADPH-dependent deamination of GMP to IMP. It functions in the conversion of nucleobase, nucleoside and nucleotide derivatives of G to A nucleotides, and in maintaining the intracellular balance of A and G nucleotides. This is GMP reductase from Escherichia coli O7:K1 (strain IAI39 / ExPEC).